A 296-amino-acid chain; its full sequence is GTPase Era (296 aa).

Residues 7–174 (KCSMSAIVGA…VDYLCETSPY (168 aa)) enclose the Era-type G domain. The G1 stretch occupies residues 15–22 (GATNAGKS). 15 to 22 (GATNAGKS) is a binding site for GTP. Residues 41 to 45 (QTTRV) form a G2 region. The tract at residues 62–65 (DTPG) is G3. Residues 62–66 (DTPGI) and 124–127 (NKID) each bind GTP. Positions 124–127 (NKID) are G4. The G5 stretch occupies residues 153-155 (ISA). The KH type-2 domain maps to 205-282 (LRHELPYSLS…HLFLFVKVRE (78 aa)).

This sequence belongs to the TRAFAC class TrmE-Era-EngA-EngB-Septin-like GTPase superfamily. Era GTPase family. As to quaternary structure, monomer.

Its subcellular location is the cytoplasm. It is found in the cell inner membrane. Functionally, an essential GTPase that binds both GDP and GTP, with rapid nucleotide exchange. Plays a role in 16S rRNA processing and 30S ribosomal subunit biogenesis and possibly also in cell cycle regulation and energy metabolism. This is GTPase Era from Ehrlichia ruminantium (strain Welgevonden).